Consider the following 101-residue polypeptide: Ubiquitin-related modifier 1 homolog (101 aa).

Gly101 is modified (1-thioglycine). Residue Gly101 forms a Glycyl lysine isopeptide (Gly-Lys) (interchain with K-? in acceptor proteins) linkage.

Belongs to the URM1 family. In terms of assembly, interacts with cer. In terms of processing, C-terminal thiocarboxylation occurs in 2 steps, it is first acyl-adenylated (-COAMP) via the hesA/moeB/thiF part of the MOCS3 homolog, then thiocarboxylated (-COSH) via the rhodanese domain of the MOCS3 homolog.

It localises to the cytoplasm. Its pathway is tRNA modification; 5-methoxycarbonylmethyl-2-thiouridine-tRNA biosynthesis. Acts as a sulfur carrier required for 2-thiolation of mcm(5)S(2)U at tRNA wobble positions of cytosolic tRNA(Lys), tRNA(Glu) and tRNA(Gln). Serves as sulfur donor in tRNA 2-thiolation reaction by being thiocarboxylated (-COSH) at its C-terminus by MOCS3. The sulfur is then transferred to tRNA to form 2-thiolation of mcm(5)S(2)U. Also acts as a ubiquitin-like protein (UBL) that is covalently conjugated via an isopeptide bond to lysine residues of target proteins such as Prx2/Jafrac1, Ciao1, Eip71CD and GILT1. The thiocarboxylated form serves as substrate for conjugation and oxidative stress specifically induces the formation of UBL-protein conjugates. The sequence is that of Ubiquitin-related modifier 1 homolog from Drosophila sechellia (Fruit fly).